We begin with the raw amino-acid sequence, 540 residues long: Zona pellucida sperm-binding protein 4 (540 aa).

Residues Met-1–Ser-18 form the signal peptide. Residues Gly-19 to Lys-505 lie on the Extracellular side of the membrane. Asn-69 carries an N-linked (GlcNAc...) asparagine glycan. The P-type domain maps to Asp-141 to Asn-183. Positions His-188–Arg-466 constitute a ZP domain. 3 N-linked (GlcNAc...) asparagine glycosylation sites follow: Asn-202, Asn-219, and Asn-267. Residue Thr-302 is glycosylated (O-linked (GalNAc...) threonine). An intrachain disulfide couples Cys-367 to Cys-442. The propeptide at Ser-463 to Gln-540 is removed in mature form. Residues Asn-470 and Asn-474 are each glycosylated (N-linked (GlcNAc...) asparagine). A helical membrane pass occupies residues Val-506–Leu-526. Residues Ala-527–Gln-540 lie on the Cytoplasmic side of the membrane.

Belongs to the ZP domain family. ZPB subfamily. In terms of processing, proteolytically cleaved before the transmembrane segment to yield the secreted ectodomain incorporated in the zona pellucida. As to expression, expressed in oocytes.

It is found in the zona pellucida. It localises to the cell membrane. In terms of biological role, component of the zona pellucida, an extracellular matrix surrounding oocytes which mediates sperm binding, induction of the acrosome reaction and prevents post-fertilization polyspermy. The zona pellucida is composed of 3 to 4 glycoproteins, ZP1, ZP2, ZP3, and ZP4. ZP4 may act as a sperm receptor. This is Zona pellucida sperm-binding protein 4 (ZP4) from Homo sapiens (Human).